The chain runs to 224 residues: Dehydration-responsive element-binding protein 1G (224 aa).

Residues 1–16 (MDVSAALSSDYSSGTP) show a composition bias toward polar residues. Residues 1 to 46 (MDVSAALSSDYSSGTPSPVAADADDGSSAYMTVSSAPPKRRAGRTK) form a disordered region. The AP2/ERF DNA-binding region spans 54–111 (VFKGVRRRNPGRWVCEVREPHGKQRIWLGTFETAEMAARAHDVAALALRGRAACLNFA). Disordered stretches follow at residues 139-161 (AFRP…SGAT) and 200-224 (PPMA…LWSY).

Belongs to the AP2/ERF transcription factor family. ERF subfamily.

The protein localises to the nucleus. Transcriptional activator that binds specifically to the DNA sequence 5'-[AG]CCGAC-3'. Binding to the C-repeat/DRE element mediates high salinity- and dehydration-inducible transcription. In Oryza sativa subsp. japonica (Rice), this protein is Dehydration-responsive element-binding protein 1G (DREB1G).